The sequence spans 238 residues: MDEPAYRRVVVKLSGEYLAGSQPFGIDQPTVDRIAGDLASARALGTEIAVVVGGGNIFRGVEVSSRGVSRPTGDTMGMLATVMNCLALEAALERRGQSARALSAFVMPEVCELFTRNAAHKYLSEGRIVLLGGGTGNPYFTTDTTAVLRAAEIGAQAVLKATNVDGVYSSDPKKDPSATRFERLSHSQALEGGYKVMDATAFALARETSLPIIVFSIAEPGSIGAILKGTGRGTIVAS.

An ATP-binding site is contributed by 12–15 (KLSG). Glycine 54 contributes to the UMP binding site. ATP contacts are provided by glycine 55 and arginine 59. Residues aspartate 74 and 135 to 142 (TGNPYFTT) contribute to the UMP site. ATP contacts are provided by threonine 162, asparagine 163, tyrosine 168, and aspartate 171.

It belongs to the UMP kinase family. Homohexamer.

Its subcellular location is the cytoplasm. It carries out the reaction UMP + ATP = UDP + ADP. The protein operates within pyrimidine metabolism; CTP biosynthesis via de novo pathway; UDP from UMP (UMPK route): step 1/1. Inhibited by UTP. Catalyzes the reversible phosphorylation of UMP to UDP. The sequence is that of Uridylate kinase from Nitrobacter hamburgensis (strain DSM 10229 / NCIMB 13809 / X14).